The primary structure comprises 301 residues: GTPase Era (301 aa).

The region spanning 7 to 175 is the Era-type G domain; sequence YCGFIAIVGR…AGIVRKHLPE (169 aa). Residues 15-22 are G1; that stretch reads GRPNVGKS. GTP is bound at residue 15-22; sequence GRPNVGKS. The interval 41 to 45 is G2; it reads QTTRH. A G3 region spans residues 62–65; it reads DTPG. Residues 62-66 and 124-127 each bind GTP; these read DTPGL and NKVD. The G4 stretch occupies residues 124–127; the sequence is NKVD. The interval 154–156 is G5; sequence ISA. The 78-residue stretch at 206–283 folds into the KH type-2 domain; that stretch reads LGAELPYSVT…HLELWVKVKS (78 aa).

This sequence belongs to the TRAFAC class TrmE-Era-EngA-EngB-Septin-like GTPase superfamily. Era GTPase family. As to quaternary structure, monomer.

It is found in the cytoplasm. The protein localises to the cell inner membrane. Functionally, an essential GTPase that binds both GDP and GTP, with rapid nucleotide exchange. Plays a role in 16S rRNA processing and 30S ribosomal subunit biogenesis and possibly also in cell cycle regulation and energy metabolism. The sequence is that of GTPase Era from Salmonella paratyphi B (strain ATCC BAA-1250 / SPB7).